The sequence spans 504 residues: Maturase K (504 aa).

The protein belongs to the intron maturase 2 family. MatK subfamily.

Its subcellular location is the plastid. The protein resides in the chloroplast. Usually encoded in the trnK tRNA gene intron. Probably assists in splicing its own and other chloroplast group II introns. The protein is Maturase K of Lepidium virginicum (Virginia pepperweed).